We begin with the raw amino-acid sequence, 263 residues long: Methylesterase 3 (263 aa).

The active-site Acyl-ester intermediate is Ser85. Catalysis depends on charge relay system residues Asp213 and His241.

This sequence belongs to the AB hydrolase superfamily. Methylesterase family.

The catalysed reaction is methyl (indol-3-yl)acetate + H2O = (indol-3-yl)acetate + methanol + H(+). It carries out the reaction methyl (-)-jasmonate + H2O = jasmonate + methanol + H(+). It functions in the pathway plant hormone biosynthesis. Its pathway is lipid metabolism; oxylipin biosynthesis. Functionally, methylesterase shown to have carboxylesterase activity, methyl indole-3-acetic acid (MeIAA) esterase activity and methyl jasmonate (MeJA) esterase activity in vitro. The protein is Methylesterase 3 of Arabidopsis thaliana (Mouse-ear cress).